A 550-amino-acid chain; its full sequence is Arginine--tRNA ligase (550 aa).

Residues 123–133 (ANPTGYLHIAH) carry the 'HIGH' region motif.

The protein belongs to the class-I aminoacyl-tRNA synthetase family. In terms of assembly, monomer.

The protein localises to the cytoplasm. It catalyses the reaction tRNA(Arg) + L-arginine + ATP = L-arginyl-tRNA(Arg) + AMP + diphosphate. The chain is Arginine--tRNA ligase from Ureaplasma parvum serovar 3 (strain ATCC 27815 / 27 / NCTC 11736).